A 454-amino-acid chain; its full sequence is Glutamate mutase epsilon subunit (454 aa).

Position 67 (Arg-67) interacts with L-glutamate. Gly-69 is an adenosylcob(III)alamin binding site. Residue Arg-99 coordinates L-glutamate. Position 122 (Asn-122) interacts with adenosylcob(III)alamin. Residues 148–149, Glu-170, and Tyr-176 contribute to the L-glutamate site; that span reads RH. Pro-179 contributes to the adenosylcob(III)alamin binding site. Residue Tyr-180 coordinates L-glutamate. Adenosylcob(III)alamin is bound by residues Phe-296, Lys-325, Glu-329, and Ile-333.

Belongs to the methylaspartate mutase GlmE subunit family. Heterotetramer composed of 2 epsilon subunits (GlmE) and 2 sigma subunits (GlmS). GlmE exists as a homodimer and GlmS as a monomer. Adenosylcob(III)alamin serves as cofactor.

The enzyme catalyses (2S,3S)-3-methyl-L-aspartate = L-glutamate. It functions in the pathway amino-acid degradation; L-glutamate degradation via mesaconate pathway; acetate and pyruvate from L-glutamate: step 1/4. Functionally, catalyzes the carbon skeleton rearrangement of L-glutamate to L-threo-3-methylaspartate ((2S,3S)-3-methylaspartate). The protein is Glutamate mutase epsilon subunit of Shigella dysenteriae serotype 1 (strain Sd197).